The chain runs to 150 residues: Large ribosomal subunit protein bL9 (150 aa).

Belongs to the bacterial ribosomal protein bL9 family.

Functionally, binds to the 23S rRNA. The polypeptide is Large ribosomal subunit protein bL9 (Streptococcus mutans serotype c (strain ATCC 700610 / UA159)).